A 736-amino-acid polypeptide reads, in one-letter code: Na(+)/H(+) antiporter NhaA (736 aa).

Residues 1 to 387 (MNHSPQSARP…ICGYLLLRAA (387 aa)) are na(+)/H(+) antiporter NhaA. Transmembrane regions (helical) follow at residues 23-43 (AGGI…NSPF), 58-78 (LSLA…LVGL), 96-116 (MLPG…FAVL), 126-146 (GWAV…SLLG), 155-175 (VFLA…IAIF), 178-198 (AEIS…LFVM), 201-221 (MGVV…FFVF), 224-244 (GVHA…KPAP), 265-285 (VAFI…FKGL), 298-318 (ILLG…WLAI), 334-354 (LYGV…IGLL), and 367-387 (IGVL…LRAA). The peptidase S49 stretch occupies residues 388–736 (RPDQSAANPL…EKAIWARYGL (349 aa)).

It in the N-terminal section; belongs to the NhaA Na(+)/H(+) (TC 2.A.33) antiporter family. This sequence in the C-terminal section; belongs to the peptidase S49 family.

The protein localises to the cell inner membrane. It carries out the reaction Na(+)(in) + 2 H(+)(out) = Na(+)(out) + 2 H(+)(in). Na(+)/H(+) antiporter that extrudes sodium in exchange for external protons. This is Na(+)/H(+) antiporter NhaA from Brucella abortus (strain 2308).